The following is a 115-amino-acid chain: Thionin-like protein 2 (115 aa).

A signal peptide spans 1–20 (MLVAVMIVMVIGNLLAQTAA).

This sequence belongs to the plant thionin (TC 1.C.44) family. Post-translationally, is disulfide-linked.

The protein resides in the secreted. In terms of biological role, may be involved in plant defense. This chain is Thionin-like protein 2, found in Arabidopsis thaliana (Mouse-ear cress).